The following is a 224-amino-acid chain: tRNA (guanine-N(7)-)-methyltransferase (224 aa).

S-adenosyl-L-methionine contacts are provided by E57, D82, and D109. D167 is a substrate binding site.

It belongs to the class I-like SAM-binding methyltransferase superfamily. TrmB family.

The enzyme catalyses guanosine(46) in tRNA + S-adenosyl-L-methionine = N(7)-methylguanosine(46) in tRNA + S-adenosyl-L-homocysteine. It functions in the pathway tRNA modification; N(7)-methylguanine-tRNA biosynthesis. Its function is as follows. Catalyzes the formation of N(7)-methylguanine at position 46 (m7G46) in tRNA. The protein is tRNA (guanine-N(7)-)-methyltransferase of Chloroflexus aurantiacus (strain ATCC 29366 / DSM 635 / J-10-fl).